The primary structure comprises 412 residues: FAD-dependent monooxygenase nscC (412 aa).

Residues 1 to 21 form the signal peptide; sequence MGKPQETILIIGAGIAGLTAS. Residues E35 and A46 each contribute to the FAD site. N-linked (GlcNAc...) asparagine glycosylation is found at N68 and N92. R119 provides a ligand contact to FAD. N170, N231, and N251 each carry an N-linked (GlcNAc...) asparagine glycan. Positions 326 and 339 each coordinate FAD.

Belongs to the paxM FAD-dependent monooxygenase family. It depends on FAD as a cofactor.

The protein operates within secondary metabolite biosynthesis. Its function is as follows. FAD-dependent monooxygenase; part of the gene cluster that mediates the biosynthesis of neosartoricin B, a prenylated anthracenone that probably exhibits T-cell antiproliferative activity, suggestive of a physiological role as an immunosuppressive agent. The non-reducing polyketide synthase nscA probably synthesizes and cyclizes the decaketide backbone. The hydrolase nscB then mediates the product release through hydrolysis followed by spontaneous decarboxylation. The prenyltransferase nscD catalyzes the addition of the dimethylallyl group to the aromatic C5. The FAD-dependent monooxygenase nscC is then responsible for the stereospecific hydroxylation at C2. Neosartoricin B can be converted into two additional compounds neosartoricins C and D. Neosartoricin C is a spirocyclic compound that is cyclized through the attack of C3 hydroxyl on C14, followed by dehydration. On the other hand, neosartoricin D is a further cyclized compound in which attack of C2 on C14 in neosartoricin C results in the formation of the acetal-containing dioxabicyclo-octanone ring. Both of these compounds are novel and possibly represent related metabolites of the gene cluster. This chain is FAD-dependent monooxygenase nscC, found in Trichophyton rubrum (strain ATCC MYA-4607 / CBS 118892) (Athlete's foot fungus).